The sequence spans 487 residues: ATP-dependent rRNA helicase RRP3 (487 aa).

The interval 22–67 is disordered; sequence IKRKALEKQQQAHANEPSPSDEDSAQSNSKDSNSNEQPEESEEIFE. Residues 67 to 95 carry the Q motif motif; it reads ESFTELDLVPELIEACKNLNYNKPTPIQS. Residues 98-270 enclose the Helicase ATP-binding domain; sequence IPPALKGSDI…RASLTNPVKC (173 aa). Residue 111–118 coordinates ATP; the sequence is AQTGSGKT. The short motif at 217–220 is the DEAD box element; the sequence is DEAD. Residues 298-442 enclose the Helicase C-terminal domain; sequence LIYLLNEFIG…ENVDKDAILA (145 aa). A disordered region spans residues 459 to 487; that stretch reads NRRNKEKQARGKGRRGRMATRDNMDREER. A compositionally biased stretch (basic and acidic residues) spans 477–487; sequence ATRDNMDREER.

The protein belongs to the DEAD box helicase family. DDX47/RRP3 subfamily. In terms of assembly, interacts with the SSU processome.

The protein resides in the nucleus. The catalysed reaction is ATP + H2O = ADP + phosphate + H(+). Functionally, ATP-dependent rRNA helicase required for pre-ribosomal RNA processing. Involved in the maturation of the 35S-pre-rRNA and to its cleavage to mature 18S rRNA. This Kluyveromyces lactis (strain ATCC 8585 / CBS 2359 / DSM 70799 / NBRC 1267 / NRRL Y-1140 / WM37) (Yeast) protein is ATP-dependent rRNA helicase RRP3.